Reading from the N-terminus, the 274-residue chain is Orotidine 5'-phosphate decarboxylase (274 aa).

Substrate contacts are provided by residues aspartate 40, 62–64 (KTH), 93–102 (DRKFIDIGNT), tyrosine 227, and arginine 245. Lysine 95 serves as the catalytic Proton donor.

This sequence belongs to the OMP decarboxylase family.

The enzyme catalyses orotidine 5'-phosphate + H(+) = UMP + CO2. It functions in the pathway pyrimidine metabolism; UMP biosynthesis via de novo pathway; UMP from orotate: step 2/2. The protein is Orotidine 5'-phosphate decarboxylase (pyrG) of Emericella nidulans (strain FGSC A4 / ATCC 38163 / CBS 112.46 / NRRL 194 / M139) (Aspergillus nidulans).